A 459-amino-acid chain; its full sequence is Cyclooctat-9-en-7-ol 5-monooxygenase (459 aa).

The interval 1–27 (MRERGPVTPAKSSAPPERPWTTGTAPG) is disordered. Cys408 serves as a coordination point for heme.

This sequence belongs to the cytochrome P450 family. The cofactor is heme.

The catalysed reaction is cyclooctat-9-en-7-ol + AH2 + O2 = cyclooctat-9-ene-5,7-diol + A + H2O. Involved in the biosynthesis of cyclooctatin, a potent inhibitor of lysophospholipase. Catalyzes the stereospecific hydroxylation of cyclooctat-9-en-7-ol to form cyclooctat-9-ene-5,7-diol. This Streptomyces melanosporofaciens protein is Cyclooctat-9-en-7-ol 5-monooxygenase.